The sequence spans 139 residues: ATP synthase epsilon chain (139 aa).

A disordered region spans residues Glu-89 to Arg-110.

It belongs to the ATPase epsilon chain family. As to quaternary structure, F-type ATPases have 2 components, CF(1) - the catalytic core - and CF(0) - the membrane proton channel. CF(1) has five subunits: alpha(3), beta(3), gamma(1), delta(1), epsilon(1). CF(0) has three main subunits: a, b and c.

Its subcellular location is the cell membrane. Its function is as follows. Produces ATP from ADP in the presence of a proton gradient across the membrane. This chain is ATP synthase epsilon chain, found in Chloroflexus aurantiacus (strain ATCC 29366 / DSM 635 / J-10-fl).